Here is a 490-residue protein sequence, read N- to C-terminus: Aspartyl/glutamyl-tRNA(Asn/Gln) amidotransferase subunit B (490 aa).

This sequence belongs to the GatB/GatE family. GatB subfamily. Heterotrimer of A, B and C subunits.

The enzyme catalyses L-glutamyl-tRNA(Gln) + L-glutamine + ATP + H2O = L-glutaminyl-tRNA(Gln) + L-glutamate + ADP + phosphate + H(+). It carries out the reaction L-aspartyl-tRNA(Asn) + L-glutamine + ATP + H2O = L-asparaginyl-tRNA(Asn) + L-glutamate + ADP + phosphate + 2 H(+). In terms of biological role, allows the formation of correctly charged Asn-tRNA(Asn) or Gln-tRNA(Gln) through the transamidation of misacylated Asp-tRNA(Asn) or Glu-tRNA(Gln) in organisms which lack either or both of asparaginyl-tRNA or glutaminyl-tRNA synthetases. The reaction takes place in the presence of glutamine and ATP through an activated phospho-Asp-tRNA(Asn) or phospho-Glu-tRNA(Gln). The polypeptide is Aspartyl/glutamyl-tRNA(Asn/Gln) amidotransferase subunit B (Prochlorococcus marinus (strain MIT 9515)).